We begin with the raw amino-acid sequence, 1582 residues long: Hybrid PKS-NRPS synthetase TAS1 (1582 aa).

A condensation (C) domain region spans residues 33 to 387 (IPLSKVQEVL…GEDTAAASRV (355 aa)). Positions 499-892 (RSRAATQPDE…KLHILGRMNN (394 aa)) are adenylation (A) domain. The Carrier domain maps to 1015–1092 (NLVDRLEASI…RQAQRLSELV (78 aa)). Residues 1127-1574 (APLFAIVGMA…GVNAHCILAS (448 aa)) enclose the Ketosynthase family 3 (KS3) domain. Active-site for beta-ketoacyl synthase activity residues include cysteine 1294 and histidine 1432. Positions 1460 to 1485 (ESRCSSGAISPTGTEQQPSDTKQTPR) are disordered. Polar residues predominate over residues 1462-1485 (RCSSGAISPTGTEQQPSDTKQTPR). The For beta-ketoacyl synthase activity role is filled by asparagine 1498.

It in the N-terminal section; belongs to the NRP synthetase family. Pantetheine 4'-phosphate serves as cofactor.

The catalysed reaction is acetoacetyl-CoA + L-isoleucine + ATP = tenuazonic acid + AMP + diphosphate + CoA + 2 H(+). Its function is as follows. Hybrid PKS-NRPS synthetase that mediates the biosynthesis of the toxin tenuazonic acid (TeA), an inhibitor of protein biosynthesis on ribosomes by suppressing the release of new protein. TAS1 alone is sufficient for TeA synthesis via the condensation of isoleucine (Ile) with acetoacetyl-CoA by the N-terminal NRPS module and subsequent cyclization conducted by the C-terminal KS domain. This Cordyceps militaris (strain CM01) (Caterpillar fungus) protein is Hybrid PKS-NRPS synthetase TAS1.